The sequence spans 184 residues: UPF0398 protein BCG9842_B3730 (184 aa).

This sequence belongs to the UPF0398 family.

In Bacillus cereus (strain G9842), this protein is UPF0398 protein BCG9842_B3730.